A 961-amino-acid polypeptide reads, in one-letter code: RNA polymerase II subunit A C-terminal domain phosphatase (961 aa).

At methionine 1 the chain carries N-acetylmethionine. The FCP1 homology domain occupies 178 to 344 (HRNRKLVLMV…SRESQTRKKV (167 aa)). The interval 328–589 (DMNAPPGSRE…EEEDTDEDDH (262 aa)) is disordered. Residues 394–406 (DSPRPGKPDERDI) show a composition bias toward basic and acidic residues. A Phosphoserine modification is found at serine 395. Acidic residues predominate over residues 450-462 (LDFDLSSDSESSS). Positions 463–475 (ESEGTKSSSSASD) are enriched in low complexity. Residues 575–588 (SMEEEEEEDTDEDD) show a composition bias toward acidic residues. Residues 629-728 (LKSKVLADVA…DKVEEQLFPL (100 aa)) form the BRCT domain. Phosphoserine is present on residues serine 674 and serine 740. 2 disordered regions span residues 730-752 (DDHT…GVPP) and 780-949 (KLIR…ADEM). Position 780 is an N6-acetyllysine (lysine 780). Polar residues predominate over residues 793 to 803 (SSSLPIRQEPS). Serine 839 carries the phosphoserine modification. Over residues 850 to 859 (CKEDLESMDK) the composition is skewed to basic and acidic residues. Acidic residues-rich tracts occupy residues 860–873 (EVDD…DDSD) and 937–947 (NEDEGSSSEAD). 2 positions are modified to phosphoserine: serine 869 and serine 872.

Homodimer. Interacts with GTF2F1. Interacts with WDR77, SNRPB and SNRNP70. Post-translationally, phosphorylated. In the presence of TFIIF, the phosphorylated form has an increased CTD phosphatase activity. The phosphorylation is required for the physical interaction with GTF2F1. In terms of tissue distribution, ubiquitously expressed.

The protein localises to the nucleus. Its subcellular location is the cytoplasm. It localises to the cytoskeleton. The protein resides in the microtubule organizing center. It is found in the centrosome. The protein localises to the spindle pole. Its subcellular location is the midbody. The catalysed reaction is O-phospho-L-seryl-[protein] + H2O = L-seryl-[protein] + phosphate. The enzyme catalyses O-phospho-L-threonyl-[protein] + H2O = L-threonyl-[protein] + phosphate. In terms of biological role, processively dephosphorylates 'Ser-2' and 'Ser-5' of the heptad repeats YSPTSPS in the C-terminal domain of the largest RNA polymerase II subunit. This promotes the activity of RNA polymerase II. Plays a role in the exit from mitosis by dephosphorylating crucial mitotic substrates (USP44, CDC20 and WEE1) that are required for M-phase-promoting factor (MPF)/CDK1 inactivation. In Homo sapiens (Human), this protein is RNA polymerase II subunit A C-terminal domain phosphatase (CTDP1).